The following is a 309-amino-acid chain: tRNA pseudouridine synthase B (309 aa).

Asp-39 serves as the catalytic Nucleophile. Residues 229–306 (LPRVVVHQES…ERVLTLRKVF (78 aa)) enclose the PUA domain.

It belongs to the pseudouridine synthase TruB family. Type 1 subfamily.

It carries out the reaction uridine(55) in tRNA = pseudouridine(55) in tRNA. Responsible for synthesis of pseudouridine from uracil-55 in the psi GC loop of transfer RNAs. This chain is tRNA pseudouridine synthase B, found in Thermotoga maritima (strain ATCC 43589 / DSM 3109 / JCM 10099 / NBRC 100826 / MSB8).